The following is a 645-amino-acid chain: tRNA 5-methylaminomethyl-2-thiouridine biosynthesis bifunctional protein MnmC (645 aa).

Residues 1–230 (MPMSEPIDWL…KRHNLHAVFD (230 aa)) are tRNA (mnm(5)s(2)U34)-methyltransferase. The tract at residues 254-645 (LGAGIAGAAA…LASERLGRRR (392 aa)) is FAD-dependent cmnm(5)s(2)U34 oxidoreductase.

It in the N-terminal section; belongs to the methyltransferase superfamily. tRNA (mnm(5)s(2)U34)-methyltransferase family. In the C-terminal section; belongs to the DAO family. FAD is required as a cofactor.

Its subcellular location is the cytoplasm. It catalyses the reaction 5-aminomethyl-2-thiouridine(34) in tRNA + S-adenosyl-L-methionine = 5-methylaminomethyl-2-thiouridine(34) in tRNA + S-adenosyl-L-homocysteine + H(+). Functionally, catalyzes the last two steps in the biosynthesis of 5-methylaminomethyl-2-thiouridine (mnm(5)s(2)U) at the wobble position (U34) in tRNA. Catalyzes the FAD-dependent demodification of cmnm(5)s(2)U34 to nm(5)s(2)U34, followed by the transfer of a methyl group from S-adenosyl-L-methionine to nm(5)s(2)U34, to form mnm(5)s(2)U34. This chain is tRNA 5-methylaminomethyl-2-thiouridine biosynthesis bifunctional protein MnmC, found in Delftia acidovorans (strain DSM 14801 / SPH-1).